A 520-amino-acid chain; its full sequence is Interferon lambda receptor 1 (520 aa).

Residues 1-20 (MAGPERWGPLLLCLLQAAPG) form the signal peptide. Over 21-228 (RPRLAPPQNV…LLEVPEANWA (208 aa)) the chain is Extracellular. One can recognise a Fibronectin type-III domain in the interval 26–126 (PPQNVTLLSQ…LDYLFEVEPA (101 aa)). N-linked (GlcNAc...) asparagine glycosylation is found at asparagine 29 and asparagine 36. 2 cysteine pairs are disulfide-bonded: cysteine 74–cysteine 82 and cysteine 86–cysteine 150. Asparagine 142 and asparagine 169 each carry an N-linked (GlcNAc...) asparagine glycan. Cysteine 195 and cysteine 217 are disulfide-bonded. The helical transmembrane segment at 229 to 249 (FLVLPSLLILLLVIAAGGVIW) threads the bilayer. The Cytoplasmic portion of the chain corresponds to 250–520 (KTLMGNPWFQ…GRTLGHYMAR (271 aa)). 2 disordered regions span residues 302 to 439 (VRPT…FLEE) and 477 to 520 (ESSP…YMAR). Residues 323–336 (AEDEEEEDEEDTED) show a composition bias toward acidic residues. The segment covering 380 to 392 (SSAWDSSDRSWAS) has biased composition (low complexity). Residues 479 to 495 (SPEEEEEARESEIEDSD) show a composition bias toward acidic residues.

It belongs to the type II cytokine receptor family. In terms of assembly, heterodimer with IL10RB. Post-translationally, ubiquitinated by FBXO45-containing E3 ligase leading to proteasomal degradation. In terms of tissue distribution, widely expressed.

Its subcellular location is the membrane. The IFNLR1/IL10RB dimer is a receptor for the cytokine ligands IFNL2 and IFNL3 and mediates their antiviral activity. The ligand/receptor complex stimulate the activation of the JAK/STAT signaling pathway leading to the expression of IFN-stimulated genes (ISG), which contribute to the antiviral state. Determines the cell type specificity of the lambda interferon action. Shows a more restricted pattern of expression in the epithelial tissues thereby limiting responses to lambda interferons primarily to epithelial cells of the respiratory, gastrointestinal, and reproductive tracts. Seems not to be essential for early virus-activated host defense in vaginal infection, but plays an important role in Toll-like receptor (TLR)-induced antiviral defense. Plays a significant role in the antiviral immune defense in the intestinal epithelium. The sequence is that of Interferon lambda receptor 1 (IFNLR1) from Homo sapiens (Human).